The chain runs to 964 residues: Pumilio homolog 3 (964 aa).

The interval Met-1–Asp-22 is disordered. The residue at position 192 (Ser-192) is a Phosphoserine. 3 disordered regions span residues Pro-204–Gly-235, Gly-256–Leu-300, and Asp-343–Pro-388. Polar residues-rich tracts occupy residues Gln-207 to Asn-216 and Asp-223 to Gln-234. The residue at position 257 (Thr-257) is a Phosphothreonine. 2 stretches are compositionally biased toward polar residues: residues Thr-287–Leu-300 and Arg-356–Gly-384. In terms of domain architecture, PUM-HD spans Phe-606–Val-946. Pumilio repeat units follow at residues Glu-626–Glu-661, Glu-662–Glu-697, Lys-698–Lys-733, Glu-734–Ser-769, Thr-770–Glu-806, Glu-807–Lys-842, Glu-843–Asn-878, and Glu-879–Thr-920.

It localises to the cytoplasm. In terms of biological role, sequence-specific RNA-binding protein that regulates translation and mRNA stability by binding the 3'-UTR of target mRNAs. Binds the APUM-binding elements (APBEs) in the 3'-UTR mRNA sequence of CLV1, PNH, WUS and FAS2. This chain is Pumilio homolog 3 (APUM3), found in Arabidopsis thaliana (Mouse-ear cress).